The primary structure comprises 410 residues: Na(+)/H(+) antiporter NhaA 1/4 (410 aa).

Transmembrane regions (helical) follow at residues Val-16–Leu-36, Leu-55–Val-75, Ala-95–Phe-115, Gly-125–Val-145, Phe-156–Cys-176, Ser-178–Leu-198, Ala-215–Val-235, Ile-275–Phe-295, Ala-299–Gly-319, Ile-340–Leu-360, and Ala-371–Gly-391.

Belongs to the NhaA Na(+)/H(+) (TC 2.A.33) antiporter family.

It is found in the cell membrane. It catalyses the reaction Na(+)(in) + 2 H(+)(out) = Na(+)(out) + 2 H(+)(in). Functionally, na(+)/H(+) antiporter that extrudes sodium in exchange for external protons. The protein is Na(+)/H(+) antiporter NhaA 1/4 of Streptomyces coelicolor (strain ATCC BAA-471 / A3(2) / M145).